We begin with the raw amino-acid sequence, 126 residues long: Fluoride-specific ion channel FluC (126 aa).

A run of 3 helical transmembrane segments spans residues 35–55 (WWTL…IGLL), 71–91 (VGML…WLLF), and 101–121 (LYVV…MILI). Na(+) is bound by residues glycine 75 and threonine 78.

The protein belongs to the fluoride channel Fluc/FEX (TC 1.A.43) family.

It localises to the cell inner membrane. It catalyses the reaction fluoride(in) = fluoride(out). Na(+) is not transported, but it plays an essential structural role and its presence is essential for fluoride channel function. Fluoride-specific ion channel. Important for reducing fluoride concentration in the cell, thus reducing its toxicity. The protein is Fluoride-specific ion channel FluC of Sphingopyxis alaskensis (strain DSM 13593 / LMG 18877 / RB2256) (Sphingomonas alaskensis).